A 438-amino-acid chain; its full sequence is GTPase Obg (438 aa).

An Obg domain is found at 2 to 160 (NMFVDQIKIE…HYLELELKML (159 aa)). The 177-residue stretch at 161-337 (ADVGLIGFPS…LMQLTADLLD (177 aa)) folds into the OBG-type G domain. Residues 167–174 (GFPSVGKS), 192–196 (FTTLT), 214–217 (DMPG), 284–287 (TKMD), and 318–320 (SAV) contribute to the GTP site. Mg(2+)-binding residues include Ser-174 and Thr-194. The 79-residue stretch at 360–438 (PDKKDEADFT…IEKFVFEFIQ (79 aa)) folds into the OCT domain.

This sequence belongs to the TRAFAC class OBG-HflX-like GTPase superfamily. OBG GTPase family. As to quaternary structure, monomer. Mg(2+) serves as cofactor.

It is found in the cytoplasm. Its function is as follows. An essential GTPase which binds GTP, GDP and possibly (p)ppGpp with moderate affinity, with high nucleotide exchange rates and a fairly low GTP hydrolysis rate. Plays a role in control of the cell cycle, stress response, ribosome biogenesis and in those bacteria that undergo differentiation, in morphogenesis control. The polypeptide is GTPase Obg (Limosilactobacillus reuteri (strain DSM 20016) (Lactobacillus reuteri)).